Here is a 421-residue protein sequence, read N- to C-terminus: MVADVLLTHFNQLFCLNDPGHPLTGQEMKKATIVEDGYIAIKDGLIVALGSGEPDAELVGTQTIMRSYKGKIATPGIIDCHTHLVYGGSREHEFAKKLAGVSYLDILAQGGGILSTVRATRSASFDNLYQKSKRLLDYMLLHGVTTVEAKSGYGLDWETEKRQLDVVAALEKDHPIDLVSTFMAAHAIPEEYKGNPKAYLDVIIKDMLPVVKEENLAEFCDIFCEKNVFTADESRYLLSKAKEMGFKLRIHADEIASIGGVDVAAELSAVSAEHLMMITDDGIAKLIGAGVIGNLLPATTFSLMEDTYAPARKMIDAGMAITLSTDSNPGSCPTANMQFVMQLGCFMLRLTPIEVLNAVTINAAYSVNRQERVGSLTVGKEADIAIFDAPNIDYPFYFFATNLIHQVYKKGQLTVDRGRIL.

His81 and His83 together coordinate Fe(3+). The Zn(2+) site is built by His81 and His83. Arg90, Tyr153, and His186 together coordinate 4-imidazolone-5-propanoate. Tyr153 provides a ligand contact to N-formimidoyl-L-glutamate. His251 lines the Fe(3+) pocket. His251 serves as a coordination point for Zn(2+). Position 254 (Glu254) interacts with 4-imidazolone-5-propanoate. Fe(3+) is bound at residue Asp326. Asp326 contacts Zn(2+). Positions 328 and 330 each coordinate N-formimidoyl-L-glutamate. Ser331 lines the 4-imidazolone-5-propanoate pocket.

This sequence belongs to the metallo-dependent hydrolases superfamily. HutI family. The cofactor is Zn(2+). Fe(3+) is required as a cofactor.

The protein resides in the cytoplasm. The enzyme catalyses 4-imidazolone-5-propanoate + H2O = N-formimidoyl-L-glutamate. The protein operates within amino-acid degradation; L-histidine degradation into L-glutamate; N-formimidoyl-L-glutamate from L-histidine: step 3/3. Functionally, catalyzes the hydrolytic cleavage of the carbon-nitrogen bond in imidazolone-5-propanoate to yield N-formimidoyl-L-glutamate. It is the third step in the universal histidine degradation pathway. In Streptococcus pyogenes serotype M1, this protein is Imidazolonepropionase.